A 144-amino-acid polypeptide reads, in one-letter code: Bombinins BLP-7/GH-2 (144 aa).

The signal sequence occupies residues 1–18; the sequence is MNFKYIVAVSFLIASTYA. Residues 19–43 constitute a propeptide that is removed on maturation; the sequence is RSVKNDEQSLSQRDVLEEESLREIR. Residue Asn70 is modified to Asparagine amide. A propeptide spanning residues 74–123 is cleaved from the precursor; the sequence is TAEEHEVMKRLEAVMRDLDSLDYPEEASEMETRSFNQEEIANLFTKKEKR. At Ile143 the chain carries Isoleucine amide.

Belongs to the bombinin family. As to expression, expressed by the skin glands.

It is found in the secreted. Its function is as follows. Antimicrobial peptide with activity against Gram-positive and -negative bacteria and fungi. Shows activity against P.acnes (MIC=5 uM), E.coli (MIC=5-6.3 uM), S.aureus (MIC=5-6.3 uM), M.luteus, S.cerevisiae and C.albicans (MIC=10-12.5 uM). Also reduces the production of interleukin (IL)-8 and granulocyte-macrophage colony stimulating factor (CSF2) in normal human epidermal keratinocytes (NHEKs). Shows anticancer activity against three human hepatoma cell lines. In vivo, using the rat ear edema model, suppress P.acnes-induced skin inflammation, significantly reducing the ear thickness. Shows weak hemolytic activity against human erythrocytes. In terms of biological role, shows weak antimicrobial activity but high hemolytic activity. In Bombina orientalis (Oriental fire-bellied toad), this protein is Bombinins BLP-7/GH-2.